The chain runs to 223 residues: 23 kDa piroplasm membrane protein (223 aa).

The signal sequence occupies residues 1 to 19 (MHKFTKVFFVAILVHTLKS). Topologically, residues 20–197 (GLVFTPVSGT…EEEKSDKKKY (178 aa)) are extracellular. N-linked (GlcNAc...) asparagine glycosylation occurs at Asn-69. Residues 198 to 218 (VLMVVVVVVFVVVASLVVFLV) traverse the membrane as a helical segment. Over 219-223 (KFCLK) the chain is Cytoplasmic.

The protein localises to the membrane. This is 23 kDa piroplasm membrane protein from Theileria buffeli.